The primary structure comprises 337 residues: Lipoyl synthase (337 aa).

Cys-81, Cys-86, Cys-92, Cys-107, Cys-111, Cys-114, and Ser-323 together coordinate [4Fe-4S] cluster. Residues 93–312 enclose the Radical SAM core domain; the sequence is FSHGTATFMI…EEYGNALGFS (220 aa).

It belongs to the radical SAM superfamily. Lipoyl synthase family. The cofactor is [4Fe-4S] cluster.

Its subcellular location is the cytoplasm. The catalysed reaction is [[Fe-S] cluster scaffold protein carrying a second [4Fe-4S](2+) cluster] + N(6)-octanoyl-L-lysyl-[protein] + 2 oxidized [2Fe-2S]-[ferredoxin] + 2 S-adenosyl-L-methionine + 4 H(+) = [[Fe-S] cluster scaffold protein] + N(6)-[(R)-dihydrolipoyl]-L-lysyl-[protein] + 4 Fe(3+) + 2 hydrogen sulfide + 2 5'-deoxyadenosine + 2 L-methionine + 2 reduced [2Fe-2S]-[ferredoxin]. The protein operates within protein modification; protein lipoylation via endogenous pathway; protein N(6)-(lipoyl)lysine from octanoyl-[acyl-carrier-protein]: step 2/2. Catalyzes the radical-mediated insertion of two sulfur atoms into the C-6 and C-8 positions of the octanoyl moiety bound to the lipoyl domains of lipoate-dependent enzymes, thereby converting the octanoylated domains into lipoylated derivatives. This Xanthomonas campestris pv. campestris (strain 8004) protein is Lipoyl synthase.